The sequence spans 169 residues: X polypeptide (169 aa).

Belongs to the IagB/IpgF/P19 family.

The chain is X polypeptide (X) from Escherichia coli.